Here is a 311-residue protein sequence, read N- to C-terminus: Probable dihydroorotate dehydrogenase A (fumarate) (311 aa).

Substrate is bound by residues K45, 69-73, and N128; that span reads NSMGL. 45–46 is a binding site for FMN; the sequence is KT. N128 provides a ligand contact to FMN. Residue C131 is the Nucleophile of the active site. FMN-binding residues include K165 and V193. Residue 194 to 195 coordinates substrate; it reads NS. FMN contacts are provided by residues G220, 248–249, and 270–271; these read GG and GT.

Belongs to the dihydroorotate dehydrogenase family. Type 1 subfamily. In terms of assembly, homodimer. FMN serves as cofactor.

The protein localises to the cytoplasm. It carries out the reaction (S)-dihydroorotate + fumarate = orotate + succinate. It participates in pyrimidine metabolism; UMP biosynthesis via de novo pathway. In terms of biological role, catalyzes the conversion of dihydroorotate to orotate with fumarate as the electron acceptor. This is Probable dihydroorotate dehydrogenase A (fumarate) (pyrDA) from Streptococcus pneumoniae serotype 4 (strain ATCC BAA-334 / TIGR4).